Here is a 521-residue protein sequence, read N- to C-terminus: Cytochrome P450 monooxygenase ABA2 (521 aa).

Residues A15–L35 form a helical membrane-spanning segment. N-linked (GlcNAc...) asparagine glycosylation occurs at N366. C458 is a binding site for heme.

Belongs to the cytochrome P450 family. Heme serves as cofactor.

The protein localises to the membrane. It participates in hormone biosynthesis. Functionally, cytochrome P450 monooxygenase involved in the biosynthesis of abscisic acid (ABA), a phytohormone that acts antagonistically toward salicylic acid (SA), jasmonic acid (JA) and ethylene (ETH) signaling, to impede plant defense responses. During pathogen-host interaction, ABA plays a dual role in disease severity by increasing plant susceptibility and accelerating pathogenesis in the fungus itself. The first step of the pathway catalyzes the reaction from farnesyl diphosphate to alpha-ionylideneethane performed by the alpha-ionylideneethane synthase ABA3 via a three-step reaction mechanism involving 2 neutral intermediates, beta-farnesene and allofarnesene. The cytochrome P450 monooxygenase ABA1 might then be involved in the conversion of alpha-ionylideneethane to alpha-ionylideneacetic acid. Alpha-ionylideneacetic acid is further converted to abscisic acid in 2 steps involving the cytochrome P450 monooxygenase ABA2 and the short-chain dehydrogenase/reductase ABA4, via the intermediates 1'-deoxy-ABA or 1',4'-trans-diol-ABA, depending on the order of action of these 2 enzymes. ABA2 is responsible for the hydroxylation of carbon atom C-1' and ABA4 might be involved in the oxidation of the C-4' carbon atom. This Pyricularia oryzae (strain 70-15 / ATCC MYA-4617 / FGSC 8958) (Rice blast fungus) protein is Cytochrome P450 monooxygenase ABA2.